Consider the following 512-residue polypeptide: MENAGAGDGAPKHYPGKMTVFVFIACLVASSGGLIFGYDIGISGGVTSMDPFLSRFFPSVYAKEKEVVDTNQYCKFDSEPLTLFTSSLYLAALIASLFASVITRKLGRKMTMLGGGFIFLIGAVLNGAAVNVAMLIIGRILLGIGVGFSIQAVPLYLSEMAPAKMRGMLNIIFQLMITVGILFANLINYFTDKIAGGWGWRVSLGLAAVPAVIMTVGSILLPDTPNSLLSRGKENEARTMLRRIRGTEDIGPEYDDLVAASEATKAIENPWRTLLERRYRPQLVMSVLIPTLQQLTGINVVMFYAPVLFKTIGFGGTASLMSAVITGLVNMFATFVSIATVDRFGRRVLFIQGGIQMIIAQFILGTLIAVKFGTAGVANISQGYAIVVVLFICLFVSAFAWSWGPLGWLVPSEIFPLEIRSAAQSVVVVFNMAFTFFIAQIFLMMLCRLKFGLFFFFGAMELIMTGFVLVFLPETKGIPIEEMDRIWGEHWYWSRFVGAGRNRVMQMASTNV.

Topologically, residues 1–17 (MENAGAGDGAPKHYPGK) are cytoplasmic. A helical membrane pass occupies residues 18–38 (MTVFVFIACLVASSGGLIFGY). Residues 39–81 (DIGISGGVTSMDPFLSRFFPSVYAKEKEVVDTNQYCKFDSEPL) lie on the Extracellular side of the membrane. A helical transmembrane segment spans residues 82-102 (TLFTSSLYLAALIASLFASVI). The Cytoplasmic segment spans residues 103–116 (TRKLGRKMTMLGGG). A helical transmembrane segment spans residues 117–137 (FIFLIGAVLNGAAVNVAMLII). Topologically, residues 138-139 (GR) are extracellular. A helical transmembrane segment spans residues 140–160 (ILLGIGVGFSIQAVPLYLSEM). At 161–166 (APAKMR) the chain is on the cytoplasmic side. The helical transmembrane segment at 167-187 (GMLNIIFQLMITVGILFANLI) threads the bilayer. Over 188–201 (NYFTDKIAGGWGWR) the chain is Extracellular. The chain crosses the membrane as a helical span at residues 202–222 (VSLGLAAVPAVIMTVGSILLP). At 223 to 294 (DTPNSLLSRG…MSVLIPTLQQ (72 aa)) the chain is on the cytoplasmic side. A helical membrane pass occupies residues 295 to 315 (LTGINVVMFYAPVLFKTIGFG). Residues 316–320 (GTASL) lie on the Extracellular side of the membrane. Residues 321–341 (MSAVITGLVNMFATFVSIATV) traverse the membrane as a helical segment. The Cytoplasmic segment spans residues 342–347 (DRFGRR). Residues 348-368 (VLFIQGGIQMIIAQFILGTLI) form a helical membrane-spanning segment. Topologically, residues 369–385 (AVKFGTAGVANISQGYA) are extracellular. A helical membrane pass occupies residues 386 to 406 (IVVVLFICLFVSAFAWSWGPL). Residues 407–425 (GWLVPSEIFPLEIRSAAQS) are Cytoplasmic-facing. The helical transmembrane segment at 426-446 (VVVVFNMAFTFFIAQIFLMML) threads the bilayer. Residues 447–450 (CRLK) lie on the Extracellular side of the membrane. A helical membrane pass occupies residues 451-471 (FGLFFFFGAMELIMTGFVLVF). Residues 472–512 (LPETKGIPIEEMDRIWGEHWYWSRFVGAGRNRVMQMASTNV) are Cytoplasmic-facing.

This sequence belongs to the major facilitator superfamily. Sugar transporter (TC 2.A.1.1) family.

It is found in the membrane. Mediates active uptake of hexoses by sugar:proton symport. In Oryza sativa subsp. japonica (Rice), this protein is Sugar transport protein MST7.